We begin with the raw amino-acid sequence, 216 residues long: Transmembrane protein 186 (216 aa).

Topologically, residues 1–68 (MAFLLRVVPR…IYRFRAIRAI (68 aa)) are mitochondrial matrix. A disordered region spans residues 31-52 (GDSKRWVGSRSPHSREKSPGTE). Residues 69 to 91 (GFLSRLKLAQTAVTVVALPPGFY) form a helical membrane-spanning segment. The Mitochondrial intermembrane portion of the chain corresponds to 92–103 (CYSQGLMTLSSL). Residues 104 to 124 (CLLGGVASFALAMLCWMSHFF) form a helical membrane-spanning segment. Residues 125–216 (RRLVGILYVN…GTLATLKNSK (92 aa)) are Mitochondrial matrix-facing.

Belongs to the TMEM186 family. As to quaternary structure, part of the mitochondrial complex I assembly/MCIA complex that comprises at least the core subunits TMEM126B, NDUFAF1, ECSIT and ACAD9 and complement subunits such as COA1 and TMEM186. Interacts with MT-ND3.

It localises to the mitochondrion inner membrane. Functionally, as part of the MCIA complex, required for efficient assembly of the mitochondrial complex I. In Mus musculus (Mouse), this protein is Transmembrane protein 186.